We begin with the raw amino-acid sequence, 275 residues long: NH(3)-dependent NAD(+) synthetase (275 aa).

46 to 53 contributes to the ATP binding site; that stretch reads GISGGQDS. A Mg(2+)-binding site is contributed by aspartate 52. Arginine 140 contacts deamido-NAD(+). Residue threonine 160 coordinates ATP. Glutamate 165 is a Mg(2+) binding site. Positions 173 and 180 each coordinate deamido-NAD(+). ATP-binding residues include lysine 189 and threonine 211. 260–261 is a deamido-NAD(+) binding site; it reads HK.

The protein belongs to the NAD synthetase family. In terms of assembly, homodimer.

It catalyses the reaction deamido-NAD(+) + NH4(+) + ATP = AMP + diphosphate + NAD(+) + H(+). The protein operates within cofactor biosynthesis; NAD(+) biosynthesis; NAD(+) from deamido-NAD(+) (ammonia route): step 1/1. Functionally, catalyzes the ATP-dependent amidation of deamido-NAD to form NAD. Uses ammonia as a nitrogen source. The sequence is that of NH(3)-dependent NAD(+) synthetase from Salmonella dublin (strain CT_02021853).